An 819-amino-acid chain; its full sequence is Leucine--tRNA ligase (819 aa).

The short motif at 41–51 is the 'HIGH' region element; it reads PYPSGTLHVGH. The short motif at 578 to 582 is the 'KMSKS' region element; it reads KMSKS. K581 is a binding site for ATP.

It belongs to the class-I aminoacyl-tRNA synthetase family.

It localises to the cytoplasm. The catalysed reaction is tRNA(Leu) + L-leucine + ATP = L-leucyl-tRNA(Leu) + AMP + diphosphate. The protein is Leucine--tRNA ligase of Fervidobacterium nodosum (strain ATCC 35602 / DSM 5306 / Rt17-B1).